The chain runs to 401 residues: Dual-specificity RNA methyltransferase RlmN (401 aa).

The active-site Proton acceptor is the Glu-114. The region spanning 120–365 is the Radical SAM core domain; sequence DKGRGTLCVS…TIVRRTRGDD (246 aa). A disulfide bond links Cys-127 and Cys-370. [4Fe-4S] cluster is bound by residues Cys-134, Cys-138, and Cys-141. Residues 187 to 188, Ser-219, 241 to 243, and Asn-327 each bind S-adenosyl-L-methionine; these read GE and SLH. The active-site S-methylcysteine intermediate is Cys-370.

Belongs to the radical SAM superfamily. RlmN family. Requires [4Fe-4S] cluster as cofactor.

It is found in the cytoplasm. It catalyses the reaction adenosine(2503) in 23S rRNA + 2 reduced [2Fe-2S]-[ferredoxin] + 2 S-adenosyl-L-methionine = 2-methyladenosine(2503) in 23S rRNA + 5'-deoxyadenosine + L-methionine + 2 oxidized [2Fe-2S]-[ferredoxin] + S-adenosyl-L-homocysteine. The catalysed reaction is adenosine(37) in tRNA + 2 reduced [2Fe-2S]-[ferredoxin] + 2 S-adenosyl-L-methionine = 2-methyladenosine(37) in tRNA + 5'-deoxyadenosine + L-methionine + 2 oxidized [2Fe-2S]-[ferredoxin] + S-adenosyl-L-homocysteine. Functionally, specifically methylates position 2 of adenine 2503 in 23S rRNA and position 2 of adenine 37 in tRNAs. m2A2503 modification seems to play a crucial role in the proofreading step occurring at the peptidyl transferase center and thus would serve to optimize ribosomal fidelity. The chain is Dual-specificity RNA methyltransferase RlmN from Xanthomonas oryzae pv. oryzae (strain MAFF 311018).